Here is a 346-residue protein sequence, read N- to C-terminus: MTPAPDQLVLRRPDDWHVHLRDDVMLEQVLPATARQFARAIVMPNLRPPVTTVDAAIAYRQRIEAALPDGMAFTPLMTAYLTDDISPDELERGHREGVFTAAKLYPANATTNSAAGVSDLACITAVLERMQAIDMPLLIHGEVTDPDIDIFDREAVFIERHLIPLRRQFPQLRVVFEHITTEQAAQFVVDGDPLMAATITPHHLHINRNAMFQGGLRSDFYCLPVAKRERHRLALRQAATSGDPSFFLGTDSAPHPRAGKESSCGCAGIYNAPYALESYLAVFEAEGALQHFEAFASENGPRFYKLPLNEDTITLKRTAQLVPAQLEGQGLVPFHASEVLDWRLAD.

Histidine 17 and histidine 19 together coordinate Zn(2+). Substrate contacts are provided by residues 19–21 and asparagine 45; that span reads HLR. Zn(2+) contacts are provided by lysine 103, histidine 140, and histidine 178. Position 103 is an N6-carboxylysine (lysine 103). Histidine 140 serves as a coordination point for substrate. Leucine 223 contacts substrate. Residue aspartate 251 participates in Zn(2+) binding. The active site involves aspartate 251. Residues histidine 255 and alanine 267 each coordinate substrate.

It belongs to the metallo-dependent hydrolases superfamily. DHOase family. Class II DHOase subfamily. As to quaternary structure, homodimer. Zn(2+) is required as a cofactor.

It catalyses the reaction (S)-dihydroorotate + H2O = N-carbamoyl-L-aspartate + H(+). The protein operates within pyrimidine metabolism; UMP biosynthesis via de novo pathway; (S)-dihydroorotate from bicarbonate: step 3/3. Functionally, catalyzes the reversible cyclization of carbamoyl aspartate to dihydroorotate. The sequence is that of Dihydroorotase from Synechococcus sp. (strain RCC307).